We begin with the raw amino-acid sequence, 400 residues long: 3-hydroxykynurenine transaminase (400 aa).

Positions 43-44 (SN) are binds to and confers specificity for 3-hydroxykynurenine; shared with dimeric partner. Residues 77 to 79 (SAH), Ser154, and Gln204 each bind pyridoxal 5'-phosphate. Ser154 serves as a coordination point for substrate. An N6-(pyridoxal phosphate)lysine modification is found at Lys205. Pyridoxal 5'-phosphate is bound by residues Tyr256 and Thr259. A substrate-binding site is contributed by Arg356.

It belongs to the class-V pyridoxal-phosphate-dependent aminotransferase family. Homodimer. May form homotetramer. Pyridoxal 5'-phosphate serves as cofactor.

Its subcellular location is the peroxisome. It catalyses the reaction glyoxylate + L-alanine = glycine + pyruvate. It carries out the reaction L-kynurenine + glyoxylate = kynurenate + glycine + H2O. The enzyme catalyses 3-hydroxy-L-kynurenine + glyoxylate = xanthurenate + glycine + H2O. The catalysed reaction is 3-hydroxy-L-kynurenine + pyruvate = xanthurenate + L-alanine + H2O. It catalyses the reaction L-kynurenine + pyruvate = kynurenate + L-alanine + H2O. It carries out the reaction 2-oxobutanoate + L-alanine = (2S)-2-aminobutanoate + pyruvate. The enzyme catalyses L-phenylalanine + pyruvate = 3-phenylpyruvate + L-alanine. The catalysed reaction is L-serine + pyruvate = 3-hydroxypyruvate + L-alanine. It catalyses the reaction L-cysteine + pyruvate = 2-oxo-3-sulfanylpropanoate + L-alanine. It carries out the reaction 3-hydroxy-L-kynurenine + oxaloacetate = 4-(2-amino-3-hydroxyphenyl)-2,4-dioxobutanoate + L-aspartate. The enzyme catalyses 3-hydroxy-L-kynurenine + 3-phenylpyruvate = 4-(2-amino-3-hydroxyphenyl)-2,4-dioxobutanoate + L-phenylalanine. The catalysed reaction is L-kynurenine + oxaloacetate = 4-(2-aminophenyl)-2,4-dioxobutanoate + L-aspartate. It catalyses the reaction 3-phenylpyruvate + L-kynurenine = 4-(2-aminophenyl)-2,4-dioxobutanoate + L-phenylalanine. The protein operates within amino-acid degradation; L-kynurenine degradation; kynurenate from L-kynurenine: step 1/2. Catalyzes the pyridoxal 5'-phosphate-dependent transamination of both 3-hydroxykynurenine and L-kynurenine to xanthurenic acid and kynurenic acid, respectively, preferentially using the alpha-ketoacid pyruvate, glyoxylate or oxaloacetate as the amino group acceptor. The affinity and catalytic efficiency for 3-hydroxykynurenine is higher than for L-kynurenine. Involved in the detoxification of cytotoxic metabolite 3-hydroxykynurenine generated by the hydroxylation of L-kynurenine, an intermediate in the tryptophan catabolism pathway. Also catalyzes, although with a lesser efficiency, the transamination of alanine with glyoxylate as an amino group acceptor. May play a role in the detoxification of glyoxylate, a toxic plant metabolite from the diet. The chain is 3-hydroxykynurenine transaminase from Aedes aegypti (Yellowfever mosquito).